Here is a 28-residue protein sequence, read N- to C-terminus: Flagellar filament 34 kDa core protein (28 aa).

It belongs to the bacterial flagellin family. The flagellum consists of an outer layer composed of repeating units of FlaA around a core that contains several antigenically related polypeptides.

Its subcellular location is the periplasmic flagellum. It localises to the periplasm. Functionally, component of the core of the flagella. This Treponema phagedenis protein is Flagellar filament 34 kDa core protein.